The primary structure comprises 383 residues: tRNA-specific 2-thiouridylase MnmA (383 aa).

Residues 11 to 18 (GLSGGVDS) and M37 contribute to the ATP site. The segment at 97–99 (NPD) is interaction with target base in tRNA. C102 (nucleophile) is an active-site residue. An intrachain disulfide couples C102 to C200. G127 contributes to the ATP binding site. The segment at 150-152 (KDQ) is interaction with tRNA. C200 serves as the catalytic Cysteine persulfide intermediate. Residues 312–313 (RY) are interaction with tRNA. The tract at residues 361–383 (IDTAHPADRSAPPALQTQSTEVV) is disordered.

The protein belongs to the MnmA/TRMU family.

It is found in the cytoplasm. It catalyses the reaction S-sulfanyl-L-cysteinyl-[protein] + uridine(34) in tRNA + AH2 + ATP = 2-thiouridine(34) in tRNA + L-cysteinyl-[protein] + A + AMP + diphosphate + H(+). In terms of biological role, catalyzes the 2-thiolation of uridine at the wobble position (U34) of tRNA, leading to the formation of s(2)U34. In Halorhodospira halophila (strain DSM 244 / SL1) (Ectothiorhodospira halophila (strain DSM 244 / SL1)), this protein is tRNA-specific 2-thiouridylase MnmA.